Here is a 207-residue protein sequence, read N- to C-terminus: Small ribosomal subunit protein uS5 (207 aa).

A disordered region spans residues 1–51 (MTDTPTKQEITSKNDKVPGAIPGEQKKNNRNNDRKRNRRGDSKNLERDSDW). Over residues 24 to 51 (EQKKNNRNNDRKRNRRGDSKNLERDSDW) the composition is skewed to basic and acidic residues. In terms of domain architecture, S5 DRBM spans 51 to 114 (WQERVVQIRR…SDGKKNLVRV (64 aa)).

This sequence belongs to the universal ribosomal protein uS5 family. Part of the 30S ribosomal subunit. Contacts proteins S4 and S8.

Its function is as follows. With S4 and S12 plays an important role in translational accuracy. Located at the back of the 30S subunit body where it stabilizes the conformation of the head with respect to the body. The sequence is that of Small ribosomal subunit protein uS5 from Prochlorococcus marinus (strain MIT 9312).